The primary structure comprises 454 residues: tRNA-2-methylthio-N(6)-dimethylallyladenosine synthase (454 aa).

The MTTase N-terminal domain occupies 6-122 (RRYHITTFGC…LQDLLQEVLA (117 aa)). Residues cysteine 15, cysteine 51, cysteine 85, cysteine 157, cysteine 161, and cysteine 164 each contribute to the [4Fe-4S] cluster site. One can recognise a Radical SAM core domain in the interval 143 to 380 (RESTVTAWVN…NHLVAIKAAE (238 aa)). The TRAM domain occupies 383–447 (QRYLGRIEEV…AFSLTGEPVK (65 aa)).

The protein belongs to the methylthiotransferase family. MiaB subfamily. As to quaternary structure, monomer. [4Fe-4S] cluster serves as cofactor.

The protein resides in the cytoplasm. It carries out the reaction N(6)-dimethylallyladenosine(37) in tRNA + (sulfur carrier)-SH + AH2 + 2 S-adenosyl-L-methionine = 2-methylsulfanyl-N(6)-dimethylallyladenosine(37) in tRNA + (sulfur carrier)-H + 5'-deoxyadenosine + L-methionine + A + S-adenosyl-L-homocysteine + 2 H(+). Functionally, catalyzes the methylthiolation of N6-(dimethylallyl)adenosine (i(6)A), leading to the formation of 2-methylthio-N6-(dimethylallyl)adenosine (ms(2)i(6)A) at position 37 in tRNAs that read codons beginning with uridine. This chain is tRNA-2-methylthio-N(6)-dimethylallyladenosine synthase, found in Gloeothece citriformis (strain PCC 7424) (Cyanothece sp. (strain PCC 7424)).